The following is a 351-amino-acid chain: Tropomodulin-2 (351 aa).

Phosphoserine is present on Ser25.

This sequence belongs to the tropomodulin family. As to quaternary structure, binds to the N-terminus of tropomyosin and to actin. Binds to TMBr3 as well as to other low molecular mass tropomyosins (TM5a or TM5), but not to high molecular mass tropomyosins (TM2 or TMBr1). In terms of tissue distribution, neuronal-tissue specific.

It localises to the cytoplasm. Its subcellular location is the cytoskeleton. Blocks the elongation and depolymerization of the actin filaments at the pointed end. The Tmod/TM complex contributes to the formation of the short actin protofilament, which in turn defines the geometry of the membrane skeleton. This is Tropomodulin-2 (Tmod2) from Rattus norvegicus (Rat).